The following is a 193-amino-acid chain: Holliday junction branch migration complex subunit RuvA (193 aa).

The tract at residues 1–64 is domain I; it reads MIGRIAGILL…EDAHLLYGFL (64 aa). The domain II stretch occupies residues 65–139; sequence TPQERTTFRE…GKLGADLGAL (75 aa). The flexible linker stretch occupies residues 139 to 143; sequence LAGAA. The domain III stretch occupies residues 144-193; it reads SPSDHAADILNALVALGYSEKEGLAAIKNVPAGTGVSDGIKLALKALSKA.

This sequence belongs to the RuvA family. In terms of assembly, homotetramer. Forms an RuvA(8)-RuvB(12)-Holliday junction (HJ) complex. HJ DNA is sandwiched between 2 RuvA tetramers; dsDNA enters through RuvA and exits via RuvB. An RuvB hexamer assembles on each DNA strand where it exits the tetramer. Each RuvB hexamer is contacted by two RuvA subunits (via domain III) on 2 adjacent RuvB subunits; this complex drives branch migration. In the full resolvosome a probable DNA-RuvA(4)-RuvB(12)-RuvC(2) complex forms which resolves the HJ.

Its subcellular location is the cytoplasm. The RuvA-RuvB-RuvC complex processes Holliday junction (HJ) DNA during genetic recombination and DNA repair, while the RuvA-RuvB complex plays an important role in the rescue of blocked DNA replication forks via replication fork reversal (RFR). RuvA specifically binds to HJ cruciform DNA, conferring on it an open structure. The RuvB hexamer acts as an ATP-dependent pump, pulling dsDNA into and through the RuvAB complex. HJ branch migration allows RuvC to scan DNA until it finds its consensus sequence, where it cleaves and resolves the cruciform DNA. This is Holliday junction branch migration complex subunit RuvA from Burkholderia vietnamiensis (strain G4 / LMG 22486) (Burkholderia cepacia (strain R1808)).